Reading from the N-terminus, the 270-residue chain is Regulatory protein RecX (270 aa).

Belongs to the RecX family.

The protein resides in the cytoplasm. Functionally, modulates RecA activity. The polypeptide is Regulatory protein RecX (Bacillus cereus (strain ZK / E33L)).